The chain runs to 60 residues: uncharacterized protein (60 aa).

This is an uncharacterized protein from Escherichia coli O157:H7.